The sequence spans 397 residues: Elongation factor Tu (397 aa).

Residues 10–207 enclose the tr-type G domain; that stretch reads KPHLNIGTIG…AVDAYIPEPE (198 aa). Positions 19–26 are G1; the sequence is GHVDHGKT. Position 19 to 26 (19 to 26) interacts with GTP; that stretch reads GHVDHGKT. Threonine 26 is a Mg(2+) binding site. A G2 region spans residues 60–64; that stretch reads GVTIN. Positions 81–84 are G3; sequence DCPG. GTP is bound by residues 81 to 85 and 136 to 139; these read DCPGH and NKVD. The tract at residues 136–139 is G4; it reads NKVD. A G5 region spans residues 174-176; sequence SAL.

This sequence belongs to the TRAFAC class translation factor GTPase superfamily. Classic translation factor GTPase family. EF-Tu/EF-1A subfamily. In terms of assembly, monomer.

The protein resides in the cytoplasm. The enzyme catalyses GTP + H2O = GDP + phosphate + H(+). In terms of biological role, GTP hydrolase that promotes the GTP-dependent binding of aminoacyl-tRNA to the A-site of ribosomes during protein biosynthesis. The sequence is that of Elongation factor Tu from Syntrophus aciditrophicus (strain SB).